Consider the following 2167-residue polypeptide: Myosin-VIIa (2167 aa).

In terms of domain architecture, Myosin motor spans 63–733 (QGVEDMISLG…HDLFLEQERD (671 aa)). An ATP-binding site is contributed by 156 to 163 (GESGAGKT). Actin-binding regions lie at residues 612–634 (LDAL…KPNE) and 712–726 (QLGH…AHDL). IQ domains are found at residues 736–758 (LTRK…RFLR), 759–788 (LRAA…GYMR), 805–827 (LRGH…EYGH), and 828–857 (KMWA…EHKQ). A coiled-coil region spans residues 886-919 (QHYRDRLHELERREIQEQLENRRRVEVNMNIIND). Residues 1008–1245 (YAKKALKHPL…PSWLELQATK (238 aa)) enclose the MyTH4 1 domain. One can recognise an FERM 1 domain in the interval 1250–1560 (IMLPITFMDG…YFLDGLKKRS (311 aa)). An SH3 domain is found at 1558–1627 (KRSKYVIALQ…PAETVYVLPT (70 aa)). 2 positions are modified to phosphoserine: Ser1651 and Ser1654. The MyTH4 2 domain occupies 1701–1849 (YSRDPIKAPL…PHQVEVEAIQ (149 aa)). Residues 1855 to 2158 (IFHKVYFPDD…SYISLMLTNM (304 aa)) form the FERM 2 domain. A Phosphothreonine modification is found at Thr2045.

It belongs to the TRAFAC class myosin-kinesin ATPase superfamily. Myosin family. As to quaternary structure, homodimerizes in a two headed molecule through the formation of a coiled-coil rod. Homodimers motility is approximately 8-10 times slower than that of myosin V, and its step size is 30 nm, which is consistent with the presence of five IQ motifs in its neck region. Interacts with Cad99C (via the cytoplasmic domain). Interacts with zip and Sans. Expressed in the setae, micro- and macrochaetae on the head, thorax and wing.

The protein resides in the cytoplasm. Its subcellular location is the cell cortex. It localises to the cell projection. It is found in the microvillus. In terms of biological role, myosins are actin-based motor molecules with ATPase activity. Unconventional myosins serve in intracellular movements: can function in cells as a single-molecule cargo transporter. A very slow and high-duty-ratio motor, may be suitable for tension maintenance of actin filaments. Their highly divergent tails are presumed to bind to membranous compartments, which would be moved relative to actin filaments. Plays a key role in the formation of cellular projections and other actin-based functions required for embryonic and larval viability. Necessary for auditory transduction: plays a role in Johnston's organ organization by functioning in scolopidial apical attachment and therefore to acoustic stimulus propagation from the antenna a2/a3 joint to transducing elements. Interaction with the myosin zip may be important for its function in scolopidial apical attachment. During oogenesis it has Cad99c-dependent and Cad99c-independent roles in regulating the shape and spacing of the follicle cell microvilli which secrete eggshell material such as the vitelline membrane. May be required for the normal expression of Cad99c in the follicle cell microvilli. The chain is Myosin-VIIa from Drosophila melanogaster (Fruit fly).